We begin with the raw amino-acid sequence, 26 residues long: Dermaseptin-J4 (26 aa).

Residue V26 is modified to Valine amide.

In terms of tissue distribution, expressed by the skin glands.

Its subcellular location is the secreted. Functionally, has antimicrobial activity. The sequence is that of Dermaseptin-J4 from Phasmahyla jandaia (Jandaia leaf frog).